We begin with the raw amino-acid sequence, 365 residues long: Glycine oxidase (365 aa).

Residues 12-13 (VI), 32-33 (DQ), 40-41 (SS), 45-47 (GGI), and isoleucine 173 each bind FAD. Substrate is bound at residue arginine 302. 327–333 (HYRNGLV) contributes to the FAD binding site.

This sequence belongs to the DAO family. ThiO subfamily. Monomer. Requires FAD as cofactor.

The catalysed reaction is glycine + O2 + H2O = glyoxylate + H2O2 + NH4(+). It carries out the reaction sarcosine + O2 + H2O = methylamine + glyoxylate + H2O2. The protein operates within cofactor biosynthesis; thiamine diphosphate biosynthesis. Functionally, catalyzes the oxidation of glycine, leading to glyoxyl imine and hydrogen peroxide as primary products; glyoxyl imine is used for the biosynthesis of the thiazole ring of thiamine. Otherwise, glyoxyl imine is spontaneously hydrolyzed in water to produce glyoxylate and ammonia. Can also use sarcosine (N-methylglycine) as substrate, and, to a lesser extent, N-ethylglycine and D-proline. Has no activity towards other amino-acids D-Asp, D-Glu, D-Gln, D-His, D-Leu, D-Lys, D-ornithine, D-Trp, D-Val, L-Ala, L-Asp, L-Glu, L-His, L-Leu, L-Lys, L-Met and L-Pro. This Pseudomonas putida (strain ATCC 47054 / DSM 6125 / CFBP 8728 / NCIMB 11950 / KT2440) protein is Glycine oxidase.